Here is a 199-residue protein sequence, read N- to C-terminus: Dephospho-CoA kinase (199 aa).

The DPCK domain maps to 3–199 (RIGLTGGIGS…HCKYLQIAQT (197 aa)). 11-16 (GSGKST) is an ATP binding site.

It belongs to the CoaE family.

The protein localises to the cytoplasm. The enzyme catalyses 3'-dephospho-CoA + ATP = ADP + CoA + H(+). It functions in the pathway cofactor biosynthesis; coenzyme A biosynthesis; CoA from (R)-pantothenate: step 5/5. In terms of biological role, catalyzes the phosphorylation of the 3'-hydroxyl group of dephosphocoenzyme A to form coenzyme A. The sequence is that of Dephospho-CoA kinase from Coxiella burnetii (strain RSA 493 / Nine Mile phase I).